Reading from the N-terminus, the 124-residue chain is Large ribosomal subunit protein bL12 (124 aa).

Belongs to the bacterial ribosomal protein bL12 family. Homodimer. Part of the ribosomal stalk of the 50S ribosomal subunit. Forms a multimeric L10(L12)X complex, where L10 forms an elongated spine to which 2 to 4 L12 dimers bind in a sequential fashion. Binds GTP-bound translation factors.

Forms part of the ribosomal stalk which helps the ribosome interact with GTP-bound translation factors. Is thus essential for accurate translation. This chain is Large ribosomal subunit protein bL12, found in Nitrosomonas europaea (strain ATCC 19718 / CIP 103999 / KCTC 2705 / NBRC 14298).